The following is a 470-amino-acid chain: Putative multidrug resistance protein MdtD (470 aa).

Topologically, residues 1–11 are periplasmic; that stretch reads MTELPDNTRWQ. Residues 12–32 form a helical membrane-spanning segment; it reads LWIVAFGFFMQSLDTTIVNTA. Residues 33–48 are Cytoplasmic-facing; sequence LPSMAKSLGESPLHMH. The chain crosses the membrane as a helical span at residues 49–69; it reads MVVVSYVLTVAVMLPASGWLA. Residues 70 to 76 lie on the Periplasmic side of the membrane; that stretch reads DKIGVRN. A helical transmembrane segment spans residues 77-97; sequence IFFAAIVLFTLGSLFCALSGT. The Cytoplasmic portion of the chain corresponds to 98-101; that stretch reads LNQL. A helical transmembrane segment spans residues 102 to 124; the sequence is VLARVLQGVGGAMMVPVGRLTVM. Residues 125 to 137 lie on the Periplasmic side of the membrane; sequence KIVPRAQYMAAMT. Residues 138–158 traverse the membrane as a helical segment; the sequence is FVTLPGQIGPLLGPALGGVLV. The Cytoplasmic portion of the chain corresponds to 159 to 164; sequence EYASWH. A helical transmembrane segment spans residues 165-185; it reads WIFLINIPVGIVGAMATFMLM. Residues 186–196 lie on the Periplasmic side of the membrane; it reads PNYTIETRRFD. Residues 197–217 traverse the membrane as a helical segment; it reads LPGFLLLAIGMAVLTLALDGS. Topologically, residues 218–224 are cytoplasmic; sequence KSMGISP. The helical transmembrane segment at 225–245 threads the bilayer; sequence WTLAGLAAGGAAAILLYLFHA. Topologically, residues 246 to 262 are periplasmic; it reads KKNSGALFSLRLFRTPT. A helical membrane pass occupies residues 263 to 283; it reads FSLGLLGSFAGRIGSGMLPFM. Residues 284-285 are Cytoplasmic-facing; that stretch reads TP. The chain crosses the membrane as a helical span at residues 286 to 306; that stretch reads VFLQIGLGFSPFHAGLMMIPM. Residues 307 to 341 are Periplasmic-facing; it reads VLGSMGMKRIVVQIVNRFGYRRVLVATTLGLALVS. A helical transmembrane segment spans residues 342-362; it reads LLFMSVALLGWYYLLPLVLLL. The Cytoplasmic segment spans residues 363-395; it reads QGMVNSARFSSMNTLTLKDLPDTLASSGNSLLS. A helical membrane pass occupies residues 396-416; it reads MIMQLSMSIGVTIAGMLLGMF. At 417 to 430 the chain is on the periplasmic side; sequence GQQHIGIDSSATHH. Residues 431 to 451 form a helical membrane-spanning segment; the sequence is VFMYTWLCMAVIIALPAIIFA. Over 452-470 the chain is Cytoplasmic; it reads RVPNDTQQNMVISRRKRSL.

The protein belongs to the major facilitator superfamily. TCR/Tet family.

The protein localises to the cell inner membrane. This chain is Putative multidrug resistance protein MdtD, found in Salmonella agona (strain SL483).